Here is a 205-residue protein sequence, read N- to C-terminus: Peptidyl-tRNA hydrolase (205 aa).

Residue Tyr14 participates in tRNA binding. His19 (proton acceptor) is an active-site residue. Residues Tyr64, Asn66, and Asn112 each contribute to the tRNA site.

Belongs to the PTH family. Monomer.

It is found in the cytoplasm. It carries out the reaction an N-acyl-L-alpha-aminoacyl-tRNA + H2O = an N-acyl-L-amino acid + a tRNA + H(+). In terms of biological role, hydrolyzes ribosome-free peptidyl-tRNAs (with 1 or more amino acids incorporated), which drop off the ribosome during protein synthesis, or as a result of ribosome stalling. Functionally, catalyzes the release of premature peptidyl moieties from peptidyl-tRNA molecules trapped in stalled 50S ribosomal subunits, and thus maintains levels of free tRNAs and 50S ribosomes. This chain is Peptidyl-tRNA hydrolase, found in Parvibaculum lavamentivorans (strain DS-1 / DSM 13023 / NCIMB 13966).